Here is a 1075-residue protein sequence, read N- to C-terminus: Disheveled-associated activator of morphogenesis 2 (1075 aa).

Residues 40–416 form the GBD/FH3 domain; that stretch reads VPIPPTEELN…QIVLQDERGD (377 aa). Residues 437–517 are a coiled coil; sequence NENEVKQWRD…VAQLNEYSQG (81 aa). 3 disordered regions span residues 517 to 611, 1006 to 1025, and 1048 to 1075; these read GGSI…IPQP, KEQR…SISE, and SKLK…KLNY. Pro residues predominate over residues 523–532; it reads PAPPPPPPGG. Positions 533–544 are enriched in low complexity; sequence PLALSSALSSAL. Over residues 550–581 the composition is skewed to pro residues; sequence PPLPPPLPFSSCPPPPAPPPPPGGPPPPPGAP. The FH2 domain occupies 605-1075; it reads KKSIPQPSHP…RERVVTKLNY (471 aa). The DAD domain maps to 1025-1075; the sequence is EETGEFDDLVSALRSGEVFDKDLSKLKRNRKRSGNQGLETSRERVVTKLNY. The span at 1064 to 1075 shows a compositional bias: basic and acidic residues; that stretch reads TSRERVVTKLNY.

This sequence belongs to the formin homology family. Expressed in progenitor populations of the embryonic spinal cord (at protein level).

Its function is as follows. Key regulator of the Wnt signaling pathway, which is required for various processes during development, such as dorsal patterning, determination of left/right symmetry or myelination in the central nervous system. Acts downstream of Wnt ligands and upstream of beta-catenin (CTNNB1). Required for canonical Wnt signaling pathway during patterning in the dorsal spinal cord by promoting the aggregation of Disheveled (Dvl) complexes, thereby clustering and formation of Wnt receptor signalosomes and potentiating Wnt activity. During dorsal patterning of the spinal cord, inhibits oligodendrocytes differentiation via interaction with PIP5K1A. Also regulates non-canonical Wnt signaling pathway. Acts downstream of PITX2 in the developing gut and is required for left/right asymmetry within dorsal mesentery: affects mesenchymal condensation by lengthening cadherin-based junctions through WNT5A and non-canonical Wnt signaling, inducing polarized condensation in the left dorsal mesentery necessary to initiate gut rotation. Together with DAAM1, required for myocardial maturation and sarcomere assembly. In Gallus gallus (Chicken), this protein is Disheveled-associated activator of morphogenesis 2.